We begin with the raw amino-acid sequence, 335 residues long: Adenine deaminase (335 aa).

H14, H16, and H194 together coordinate Zn(2+). The active-site Proton donor is E197. D275 contributes to the Zn(2+) binding site. A substrate-binding site is contributed by D276.

This sequence belongs to the metallo-dependent hydrolases superfamily. Adenosine and AMP deaminases family. Adenine deaminase type 2 subfamily. It depends on Zn(2+) as a cofactor.

The catalysed reaction is adenine + H2O + H(+) = hypoxanthine + NH4(+). Its function is as follows. Catalyzes the hydrolytic deamination of adenine to hypoxanthine. Plays an important role in the purine salvage pathway and in nitrogen catabolism. This chain is Adenine deaminase, found in Chlorobium phaeobacteroides (strain BS1).